The primary structure comprises 926 residues: Alanine--tRNA ligase (926 aa).

His-611, His-615, Cys-714, and His-718 together coordinate Zn(2+).

The protein belongs to the class-II aminoacyl-tRNA synthetase family. The cofactor is Zn(2+).

It localises to the cytoplasm. The enzyme catalyses tRNA(Ala) + L-alanine + ATP = L-alanyl-tRNA(Ala) + AMP + diphosphate. Its function is as follows. Catalyzes the attachment of alanine to tRNA(Ala) in a two-step reaction: alanine is first activated by ATP to form Ala-AMP and then transferred to the acceptor end of tRNA(Ala). Also edits incorrectly charged Ser-tRNA(Ala) and Gly-tRNA(Ala) via its editing domain. This is Alanine--tRNA ligase from Methanosarcina mazei (strain ATCC BAA-159 / DSM 3647 / Goe1 / Go1 / JCM 11833 / OCM 88) (Methanosarcina frisia).